The following is a 417-amino-acid chain: Putative Bro-N domain-containing protein 289L (417 aa).

The region spanning 4–134 is the Bro-N domain; sequence LINLKDCKEY…VILPSIRKFG (131 aa). Residues 152–193 are a coiled coil; the sequence is KDKSEQELQFQLKQEREEKENAYIKLRSETKRLKQQIKRTLE.

It belongs to the IIV-6 201R/289L family.

The sequence is that of Putative Bro-N domain-containing protein 289L from Invertebrate iridescent virus 6 (IIV-6).